The sequence spans 410 residues: D-3-phosphoglycerate dehydrogenase (410 aa).

NAD(+)-binding positions include 162-163 (HI), D182, 239-241 (AAR), and D265. R241 is a catalytic residue. E270 is a catalytic residue. H293 acts as the Proton donor in catalysis. Position 293–296 (293–296 (HIGG)) interacts with NAD(+). In terms of domain architecture, ACT spans 341–410 (RLLHIHENRP…DGTIRARVLY (70 aa)).

Belongs to the D-isomer specific 2-hydroxyacid dehydrogenase family.

The enzyme catalyses (2R)-3-phosphoglycerate + NAD(+) = 3-phosphooxypyruvate + NADH + H(+). It carries out the reaction (R)-2-hydroxyglutarate + NAD(+) = 2-oxoglutarate + NADH + H(+). It functions in the pathway amino-acid biosynthesis; L-serine biosynthesis; L-serine from 3-phospho-D-glycerate: step 1/3. With respect to regulation, in bacteria displays feedback inhibition by L-serine. Catalyzes the reversible oxidation of 3-phospho-D-glycerate to 3-phosphonooxypyruvate, the first step of the phosphorylated L-serine biosynthesis pathway. Also catalyzes the reversible oxidation of 2-hydroxyglutarate to 2-oxoglutarate. The chain is D-3-phosphoglycerate dehydrogenase (serA) from Haemophilus influenzae (strain ATCC 51907 / DSM 11121 / KW20 / Rd).